A 269-amino-acid polypeptide reads, in one-letter code: Formamidopyrimidine-DNA glycosylase (269 aa).

Pro-2 serves as the catalytic Schiff-base intermediate with DNA. Residue Glu-3 is the Proton donor of the active site. Lys-57 acts as the Proton donor; for beta-elimination activity in catalysis. 3 residues coordinate DNA: His-90, Arg-109, and Lys-150. Residues 235-269 (QVYGRKGEPCRVCGTPIVATKHAQRATFYCRQCQK) form an FPG-type zinc finger. The active-site Proton donor; for delta-elimination activity is Arg-259.

It belongs to the FPG family. In terms of assembly, monomer. The cofactor is Zn(2+).

The enzyme catalyses Hydrolysis of DNA containing ring-opened 7-methylguanine residues, releasing 2,6-diamino-4-hydroxy-5-(N-methyl)formamidopyrimidine.. The catalysed reaction is 2'-deoxyribonucleotide-(2'-deoxyribose 5'-phosphate)-2'-deoxyribonucleotide-DNA = a 3'-end 2'-deoxyribonucleotide-(2,3-dehydro-2,3-deoxyribose 5'-phosphate)-DNA + a 5'-end 5'-phospho-2'-deoxyribonucleoside-DNA + H(+). Functionally, involved in base excision repair of DNA damaged by oxidation or by mutagenic agents. Acts as a DNA glycosylase that recognizes and removes damaged bases. Has a preference for oxidized purines, such as 7,8-dihydro-8-oxoguanine (8-oxoG). Has AP (apurinic/apyrimidinic) lyase activity and introduces nicks in the DNA strand. Cleaves the DNA backbone by beta-delta elimination to generate a single-strand break at the site of the removed base with both 3'- and 5'-phosphates. This is Formamidopyrimidine-DNA glycosylase from Escherichia coli O7:K1 (strain IAI39 / ExPEC).